Consider the following 147-residue polypeptide: Cytochrome c-type biogenesis protein CcmE (147 aa).

Residues 1–7 (MKPRHKR) are Cytoplasmic-facing. The chain crosses the membrane as a helical; Signal-anchor for type II membrane protein span at residues 8-28 (AAIIAGGLAALGIAAYLVLNA). The Periplasmic portion of the chain corresponds to 29–147 (FQSNLVFFFS…QIQKTIKSLK (119 aa)). Positions 121 and 125 each coordinate heme.

This sequence belongs to the CcmE/CycJ family.

It localises to the cell inner membrane. Functionally, heme chaperone required for the biogenesis of c-type cytochromes. Transiently binds heme delivered by CcmC and transfers the heme to apo-cytochromes in a process facilitated by CcmF and CcmH. This is Cytochrome c-type biogenesis protein CcmE from Albidiferax ferrireducens (strain ATCC BAA-621 / DSM 15236 / T118) (Rhodoferax ferrireducens).